Reading from the N-terminus, the 150-residue chain is Leukotriene C4 synthase (150 aa).

The Cytoplasmic portion of the chain corresponds to 1–6; it reads MKDEVA. Residues 7–27 form a helical membrane-spanning segment; the sequence is LLATVTLVGVLLQAYFSLQVI. Topologically, residues 28-48 are lumenal; it reads SARRAFHVSPPLTSGPPEFER. Residue Arg-30 participates in glutathione binding. The active-site Proton donor is Arg-31. Phosphoserine is present on Ser-36. Residues 49–69 traverse the membrane as a helical segment; it reads VFRAQVNCSEYFPLFLATLWV. Residues 51 to 55, Gln-53, and 58 to 59 each bind glutathione; these read RAQVN and EY. Residues 70–73 are Cytoplasmic-facing; that stretch reads AGIF. The helical transmembrane segment at 74-94 threads the bilayer; it reads FHEGAAALCGLFYLFARLRYF. 93-97 is a glutathione binding site; the sequence is YFQGY. Residues 95 to 104 lie on the Lumenal side of the membrane; sequence QGYARSAQLR. The active-site Proton acceptor is the Arg-104. The chain crosses the membrane as a helical span at residues 105 to 124; that stretch reads LTPLYASARALWLLVAMAAL. The Cytoplasmic portion of the chain corresponds to 125-150; the sequence is GLLVHFLPGTLRTALFRWLQMLLPMA.

It belongs to the MAPEG family. In terms of assembly, homotrimer. Interacts with ALOX5AP and ALOX5. In terms of processing, phosphorylation at Ser-36 by RPS6KB1 inhibits the leukotriene-C4 synthase activity. Widely expressed.

Its subcellular location is the nucleus outer membrane. It localises to the endoplasmic reticulum membrane. The protein resides in the nucleus membrane. The catalysed reaction is leukotriene C4 = leukotriene A4 + glutathione. The enzyme catalyses (13S,14S)-epoxy-(4Z,7Z,9E,11E,16Z,19Z)-docosahexaenoate + glutathione = (13R)-S-glutathionyl-(14S)-hydroxy-(4Z,7Z,9E,11E,16Z,19Z)-docosahexaenoate. It functions in the pathway lipid metabolism; leukotriene C4 biosynthesis. Its activity is regulated as follows. Inhibited by MK886. In terms of biological role, catalyzes the conjugation of leukotriene A4 with reduced glutathione (GSH) to form leukotriene C4 with high specificity. Can also catalyze the transfer of a glutathionyl group from glutathione (GSH) to 13(S),14(S)-epoxy-docosahexaenoic acid to form maresin conjugate in tissue regeneration 1 (MCTR1), a bioactive lipid mediator that possess potent anti-inflammatory and proresolving actions. This Mus musculus (Mouse) protein is Leukotriene C4 synthase (Ltc4s).